The primary structure comprises 169 residues: Nicotinamide-nucleotide adenylyltransferase (169 aa).

Belongs to the archaeal NMN adenylyltransferase family.

The protein localises to the cytoplasm. It carries out the reaction beta-nicotinamide D-ribonucleotide + ATP + H(+) = diphosphate + NAD(+). It functions in the pathway cofactor biosynthesis; NAD(+) biosynthesis; NAD(+) from nicotinamide D-ribonucleotide: step 1/1. The polypeptide is Nicotinamide-nucleotide adenylyltransferase (Picrophilus torridus (strain ATCC 700027 / DSM 9790 / JCM 10055 / NBRC 100828 / KAW 2/3)).